Reading from the N-terminus, the 395-residue chain is NAD(P)H-quinone oxidoreductase subunit H (395 aa).

The protein belongs to the complex I 49 kDa subunit family. NDH-1 can be composed of about 15 different subunits; different subcomplexes with different compositions have been identified which probably have different functions.

It localises to the cellular thylakoid membrane. The enzyme catalyses a plastoquinone + NADH + (n+1) H(+)(in) = a plastoquinol + NAD(+) + n H(+)(out). It catalyses the reaction a plastoquinone + NADPH + (n+1) H(+)(in) = a plastoquinol + NADP(+) + n H(+)(out). Its function is as follows. NDH-1 shuttles electrons from an unknown electron donor, via FMN and iron-sulfur (Fe-S) centers, to quinones in the respiratory and/or the photosynthetic chain. The immediate electron acceptor for the enzyme in this species is believed to be plastoquinone. Couples the redox reaction to proton translocation, and thus conserves the redox energy in a proton gradient. Cyanobacterial NDH-1 also plays a role in inorganic carbon-concentration. The chain is NAD(P)H-quinone oxidoreductase subunit H from Prochlorococcus marinus (strain MIT 9515).